The primary structure comprises 268 residues: 4-hydroxy-tetrahydrodipicolinate reductase (268 aa).

Residues 10 to 15 (GASGRM) and Asp-36 each bind NAD(+). Residue Arg-37 coordinates NADP(+). Residues 99–101 (GTT) and 123–126 (SANM) contribute to the NAD(+) site. His-156 functions as the Proton donor/acceptor in the catalytic mechanism. A (S)-2,3,4,5-tetrahydrodipicolinate-binding site is contributed by His-157. The active-site Proton donor is the Lys-160. 166–167 (GT) is a binding site for (S)-2,3,4,5-tetrahydrodipicolinate.

The protein belongs to the DapB family.

It localises to the cytoplasm. The catalysed reaction is (S)-2,3,4,5-tetrahydrodipicolinate + NAD(+) + H2O = (2S,4S)-4-hydroxy-2,3,4,5-tetrahydrodipicolinate + NADH + H(+). It catalyses the reaction (S)-2,3,4,5-tetrahydrodipicolinate + NADP(+) + H2O = (2S,4S)-4-hydroxy-2,3,4,5-tetrahydrodipicolinate + NADPH + H(+). The protein operates within amino-acid biosynthesis; L-lysine biosynthesis via DAP pathway; (S)-tetrahydrodipicolinate from L-aspartate: step 4/4. Its function is as follows. Catalyzes the conversion of 4-hydroxy-tetrahydrodipicolinate (HTPA) to tetrahydrodipicolinate. The sequence is that of 4-hydroxy-tetrahydrodipicolinate reductase from Burkholderia mallei (strain NCTC 10247).